The sequence spans 514 residues: Cytochrome P450 monooxygenase nodJ (514 aa).

The chain crosses the membrane as a helical span at residues 2 to 24; the sequence is ELIVIIITLAFCILLYGTRWRAA. Asparagine 144, asparagine 245, and asparagine 416 each carry an N-linked (GlcNAc...) asparagine glycan. Cysteine 432 serves as a coordination point for heme.

Belongs to the cytochrome P450 family. Heme is required as a cofactor.

It localises to the membrane. Its pathway is secondary metabolite biosynthesis. In terms of biological role, cytochrome P450 monooxygenase; part of the gene cluster that mediates the biosynthesis of the indole diterpenes nodulisporic acids (NA). Nodulisporic acid A (NAA) and its chemically modified derivatives are of particular significance because of their highly potent insecticidal activity against blood-feeding arthropods and lack of observable adverse effects on mammals, in particular the tremogenicity associated with the paspaline-derived IDTs is not observed. The geranylgeranyl diphosphate (GGPP) synthase ggs1, localized outside of the cluster, is proposed to catalyze the first step in nodulisporic acid biosynthesis via conversion of farnesyl pyrophosphate and isopentyl pyrophosphate into geranylgeranyl pyrophosphate (GGPP). Condensation of indole-3-glycerol phosphate with GGPP by the prenyl transferase nodC then forms 3-geranylgeranylindole (3-GGI). Epoxidation by the FAD-dependent monooxygenase nodM leads to a single-epoxidized-GGI that is substrate of the terpene cyclase nodB for cyclization to yield emindole SB. The terminal methyl carbon, C28, of emindole SB is then oxidized by the cytochrome P450 monooxygenase nodW to produce nodulisporic acid F (NAF), the pentacyclic core of NAA. NAF is converted to nodulisporic acid E (NAE) via prenylation. This step is probably performed by one of the indole diterpene prenyltransferases nodD1 or nodD2. Several oxidation steps performed by the FAD-linked oxidoreductase nodO and one of the cytochrome P450 monooxygenase nodR, nodX or nodZ further convert NAE to nodulisporic acid D (NAD). NAD is substrate of cytochrome P450 monooxygenase nodJ to produce the precursor of nodulisporic acid C (NAC), converted to NAC by one of the indole diterpene prenyltransferases nodD1 or nodD2. The FAD-dependent monooxygenase nodY2 then oxidizes NAC to nodulisporic acid B (NAB). Finally NAB is converted to NAA by one of the cytochrome P450 monooxygenases nodR, nodX or nodZ. This Hypoxylon pulicicidum protein is Cytochrome P450 monooxygenase nodJ.